The sequence spans 689 residues: DNA-directed RNA polymerase subunit beta' (689 aa).

Residues Cys-69, Cys-71, Cys-87, and Cys-90 each contribute to the Zn(2+) site. Mg(2+) is bound by residues Asp-489, Asp-491, and Asp-493.

Belongs to the RNA polymerase beta' chain family. RpoC1 subfamily. In terms of assembly, in plastids the minimal PEP RNA polymerase catalytic core is composed of four subunits: alpha, beta, beta', and beta''. When a (nuclear-encoded) sigma factor is associated with the core the holoenzyme is formed, which can initiate transcription. The cofactor is Mg(2+). It depends on Zn(2+) as a cofactor.

Its subcellular location is the plastid. The protein resides in the chloroplast. It carries out the reaction RNA(n) + a ribonucleoside 5'-triphosphate = RNA(n+1) + diphosphate. Its function is as follows. DNA-dependent RNA polymerase catalyzes the transcription of DNA into RNA using the four ribonucleoside triphosphates as substrates. The sequence is that of DNA-directed RNA polymerase subunit beta' from Lactuca sativa (Garden lettuce).